Reading from the N-terminus, the 294-residue chain is Bifunctional protein FolD (294 aa).

Residues 166–168, serine 195, and isoleucine 236 each bind NADP(+); that span reads GRS.

The protein belongs to the tetrahydrofolate dehydrogenase/cyclohydrolase family. As to quaternary structure, homodimer.

It catalyses the reaction (6R)-5,10-methylene-5,6,7,8-tetrahydrofolate + NADP(+) = (6R)-5,10-methenyltetrahydrofolate + NADPH. It carries out the reaction (6R)-5,10-methenyltetrahydrofolate + H2O = (6R)-10-formyltetrahydrofolate + H(+). Its pathway is one-carbon metabolism; tetrahydrofolate interconversion. Catalyzes the oxidation of 5,10-methylenetetrahydrofolate to 5,10-methenyltetrahydrofolate and then the hydrolysis of 5,10-methenyltetrahydrofolate to 10-formyltetrahydrofolate. In Chloroherpeton thalassium (strain ATCC 35110 / GB-78), this protein is Bifunctional protein FolD.